A 138-amino-acid chain; its full sequence is Probable DNA-directed RNA polymerases I, II, and III subunit RPABC2 (138 aa).

Acidic residues-rich tracts occupy residues 1–27 (MADD…VIEE) and 35–46 (EEEDDDNNVDEN). Residues 1–46 (MADDDDYQDMDNDDFVDDNEMEDVIEEEQQRPDHEEEDDDNNVDEN) form a disordered region.

The protein belongs to the archaeal Rpo6/eukaryotic RPB6 RNA polymerase subunit family. Component of the RNA polymerase I (Pol I), RNA polymerase II (Pol II) and RNA polymerase III (Pol III) complexes consisting of at least 13, 12 and 17 subunits, respectively.

It localises to the nucleus. DNA-dependent RNA polymerases catalyze the transcription of DNA into RNA using the four ribonucleoside triphosphates as substrates. Common component of RNA polymerases I, II and III which synthesize ribosomal RNA precursors, mRNA precursors and many functional non-coding RNAs, and small RNAs, such as 5S rRNA and tRNAs, respectively. Pol II is the central component of the basal RNA polymerase II transcription machinery. Pols are composed of mobile elements that move relative to each other. In Pol II, RPB6 is part of the clamp element and together with parts of RPB1 and RPB2 forms a pocket to which the RPB4-RPB7 subcomplex binds. The protein is Probable DNA-directed RNA polymerases I, II, and III subunit RPABC2 of Caenorhabditis briggsae.